Reading from the N-terminus, the 269-residue chain is Undecaprenyl-diphosphatase (269 aa).

Helical transmembrane passes span 41-61 (FATMFEIVIQLGAILAVVFHY), 78-98 (GFNLWFKIFIAFIPAAVIGLL), 107-127 (LFSPFTVAIALIAGAIMMIVI), 148-167 (SLLIGIAQVMSLFPGMSRSA), 184-204 (AEFSFFLAIPTMFAATTLSLL), 213-233 (LEWQALAVGFITSFLTALFVV), and 248-268 (FAYYRLAVGVLMILLVAEKIV).

The protein belongs to the UppP family.

The protein localises to the cell membrane. It catalyses the reaction di-trans,octa-cis-undecaprenyl diphosphate + H2O = di-trans,octa-cis-undecaprenyl phosphate + phosphate + H(+). Its function is as follows. Catalyzes the dephosphorylation of undecaprenyl diphosphate (UPP). Confers resistance to bacitracin. The protein is Undecaprenyl-diphosphatase of Thermoanaerobacter pseudethanolicus (strain ATCC 33223 / 39E) (Clostridium thermohydrosulfuricum).